We begin with the raw amino-acid sequence, 461 residues long: Vitamin K-dependent protein C (461 aa).

An N-terminal signal peptide occupies residues 1–18 (MWQLTSLLLFVATWGISG). An O-linked (GalNAc...) threonine glycan is attached at Thr-19. Residues 19–42 (TPAPLDSVFSSSERAHQVLRIRKR) constitute a propeptide that is removed on maturation. The 46-residue stretch at 43-88 (ANSFLEELRHSSLERECIEEICDFEEAKEIFQNVDDTLAFWSKHVD) folds into the Gla domain. Residues Glu-48, Glu-49, Glu-56, Glu-58, Glu-61, Glu-62, Glu-67, Glu-68, and Glu-71 each carry the 4-carboxyglutamate modification. Residues Cys-59 and Cys-64 are joined by a disulfide bond. 4 disulfide bridges follow: Cys-92–Cys-111, Cys-101–Cys-106, Cys-105–Cys-120, and Cys-122–Cys-131. 2 EGF-like domains span residues 97–132 (LEHP…RFCQ) and 136–176 (SFLN…LQCH). Residue Asp-113 is modified to (3R)-3-hydroxyaspartate. Residue Asn-139 is glycosylated (N-linked (GlcNAc...) asparagine). 5 disulfide bridges follow: Cys-140-Cys-151, Cys-147-Cys-160, Cys-162-Cys-175, Cys-183-Cys-319, and Cys-238-Cys-254. The Peptidase S1 domain occupies 212 to 450 (LIDGKMTRRG…YLDWIHGHIR (239 aa)). Catalysis depends on His-253, which acts as the Charge relay system. Residue Asn-290 is glycosylated (N-linked (GlcNAc...) asparagine). The active-site Charge relay system is the Asp-299. Ser-347 is subject to Phosphoserine; by FAM20C. An N-linked (GlcNAc...) asparagine glycan is attached at Asn-355. Asn-371 carries an N-linked (GlcNAc...) asparagine; atypical; partial glycan. 2 cysteine pairs are disulfide-bonded: Cys-373-Cys-387 and Cys-398-Cys-426. Catalysis depends on Ser-402, which acts as the Charge relay system.

It belongs to the peptidase S1 family. As to quaternary structure, synthesized as a single chain precursor, which is cleaved into a light chain and a heavy chain held together by a disulfide bond. The enzyme is then activated by thrombin, which cleaves a tetradecapeptide from the amino end of the heavy chain; this reaction, which occurs at the surface of endothelial cells, is strongly promoted by thrombomodulin. Interacts (activated) with iripin-8, a serine protease inhibitor from Ixodes ricinus saliva. In terms of processing, the vitamin K-dependent, enzymatic carboxylation of some Glu residues allows the modified protein to bind calcium. Post-translationally, N- and O-glycosylated. Partial (70%) N-glycosylation of Asn-371 with an atypical N-X-C site produces a higher molecular weight form referred to as alpha. The lower molecular weight form, not N-glycosylated at Asn-371, is beta. O-glycosylated with core 1 or possibly core 8 glycans. The iron and 2-oxoglutarate dependent 3-hydroxylation of aspartate and asparagine is (R) stereospecific within EGF domains. In terms of processing, may be phosphorylated on a Ser or Thr in a region (AA 25-30) of the propeptide. Plasma; synthesized in the liver.

The protein resides in the secreted. It is found in the golgi apparatus. Its subcellular location is the endoplasmic reticulum. The enzyme catalyses Degradation of blood coagulation factors Va and VIIIa.. In terms of biological role, protein C is a vitamin K-dependent serine protease that regulates blood coagulation by inactivating factors Va and VIIIa in the presence of calcium ions and phospholipids. Exerts a protective effect on the endothelial cell barrier function. This chain is Vitamin K-dependent protein C (PROC), found in Homo sapiens (Human).